Reading from the N-terminus, the 354-residue chain is MFERLEVMRKTYYALQEKLASGISDVKEITKLMKELKSLEDAVVAYEKYLSLKEQLKDLEELLELETESSVLEMAKAEEKSLESDIENLEESLRILLLPKDPDDDKNVIIEIKGAAGGDEGNIFAGDLFKMYSKYAESMGWKVTLVNTTPGSSGGFAGIEFIISGENAFSYLKHESGVHRVQRVPETESQGRIHTSTAVVLALPEQEDIEYDVKWEDIRFDTYNSSGAGGQSVNTTYSAVRLTHIPTNVVVTSQEERSQHANKDRAYKLLVTRIYDKIQQEQLEKEGESRKALIGRGNRSEKIRTYNYPQNRVTDHRIGLTINRLDAIMEGRIDLIIEPLINEIQKEALEGQSK.

Residue Gln-231 is modified to N5-methylglutamine.

It belongs to the prokaryotic/mitochondrial release factor family. In terms of processing, methylated by PrmC. Methylation increases the termination efficiency of RF1.

It localises to the cytoplasm. Its function is as follows. Peptide chain release factor 1 directs the termination of translation in response to the peptide chain termination codons UAG and UAA. The polypeptide is Peptide chain release factor 1 (Acholeplasma laidlawii (strain PG-8A)).